Here is a 324-residue protein sequence, read N- to C-terminus: NADH-ubiquinone oxidoreductase chain 1 (324 aa).

9 helical membrane-spanning segments follow: residues I9–L29, P43–I63, F75–M95, L106–G126, I146–F166, S177–A197, I237–F257, E259–V279, and F299–G319.

The protein belongs to the complex I subunit 1 family.

It localises to the mitochondrion inner membrane. It catalyses the reaction a ubiquinone + NADH + 5 H(+)(in) = a ubiquinol + NAD(+) + 4 H(+)(out). In terms of biological role, core subunit of the mitochondrial membrane respiratory chain NADH dehydrogenase (Complex I) that is believed to belong to the minimal assembly required for catalysis. Complex I functions in the transfer of electrons from NADH to the respiratory chain. The immediate electron acceptor for the enzyme is believed to be ubiquinone. In Salmo salar (Atlantic salmon), this protein is NADH-ubiquinone oxidoreductase chain 1 (MT-ND1).